Reading from the N-terminus, the 222-residue chain is N-(5'-phosphoribosyl)anthranilate isomerase (222 aa).

This sequence belongs to the TrpF family.

It catalyses the reaction N-(5-phospho-beta-D-ribosyl)anthranilate = 1-(2-carboxyphenylamino)-1-deoxy-D-ribulose 5-phosphate. The protein operates within amino-acid biosynthesis; L-tryptophan biosynthesis; L-tryptophan from chorismate: step 3/5. The chain is N-(5'-phosphoribosyl)anthranilate isomerase from Rhizobium etli (strain ATCC 51251 / DSM 11541 / JCM 21823 / NBRC 15573 / CFN 42).